The following is an 820-amino-acid chain: Nuclear pore complex protein Nup93 (820 aa).

The protein belongs to the nucleoporin interacting component (NIC) family.

The protein localises to the nucleus membrane. Its subcellular location is the nucleus. It localises to the nuclear pore complex. In terms of biological role, plays a role in the nuclear pore complex (NPC) assembly and/or maintenance. The sequence is that of Nuclear pore complex protein Nup93 (dye) from Danio rerio (Zebrafish).